The chain runs to 450 residues: Phosphoglucosamine mutase (450 aa).

Ser-101 acts as the Phosphoserine intermediate in catalysis. Mg(2+)-binding residues include Ser-101, Asp-240, Asp-242, and Asp-244. Phosphoserine is present on Ser-101.

Belongs to the phosphohexose mutase family. The cofactor is Mg(2+). Activated by phosphorylation.

It catalyses the reaction alpha-D-glucosamine 1-phosphate = D-glucosamine 6-phosphate. Its function is as follows. Catalyzes the conversion of glucosamine-6-phosphate to glucosamine-1-phosphate. This is Phosphoglucosamine mutase from Streptococcus thermophilus (strain CNRZ 1066).